Reading from the N-terminus, the 129-residue chain is Prefoldin subunit 4 (129 aa).

At Met1 the chain carries N-acetylmethionine.

This sequence belongs to the prefoldin subunit beta family. As to quaternary structure, heterohexamer of two PFD-alpha type and four PFD-beta type subunits.

Functionally, binds specifically to cytosolic chaperonin (c-CPN) and transfers target proteins to it. Binds to nascent polypeptide chain and promotes folding in an environment in which there are many competing pathways for nonnative proteins. This Saccharomyces cerevisiae (strain ATCC 204508 / S288c) (Baker's yeast) protein is Prefoldin subunit 4 (GIM3).